The sequence spans 775 residues: Tyrosine-protein phosphatase non-receptor type 12 (775 aa).

Position 1 is an N-acetylmethionine (Met1). Ser19 carries the post-translational modification Phosphoserine. In terms of domain architecture, Tyrosine-protein phosphatase spans 28–293 (FARDFMRLRR…ELVHRAIAQL (266 aa)). Residues Asp199, 231–237 (CSAGCGR), and Gln278 contribute to the substrate site. Cys231 acts as the Phosphocysteine intermediate in catalysis. Residues 322–341 (SSIDSEKQDSPPPKPPRTRS) form a disordered region. A phosphoserine mark is found at Ser331, Ser434, Ser448, and Ser467. The tract at residues 344 to 437 (VEGDAKEEIL…KLERNLSFEI (94 aa)) is interaction with TGFB1I1. The disordered stretch occupies residues 462–775 (KIKSASSSVV…GPREPPSEWT (314 aa)). Thr519 is subject to Phosphothreonine. Phosphoserine occurs at positions 550 and 567. The span at 558–573 (NHSQTLKTVSSTPNST) shows a compositional bias: polar residues. Thr569 is subject to Phosphothreonine. Ser596 is modified (phosphoserine). At Thr598 the chain carries Phosphothreonine. Ser603, Ser606, Ser608, and Ser613 each carry phosphoserine. Over residues 622-640 (TSISTASATVSPASSAESA) the composition is skewed to low complexity. Ser673 carries the phosphoserine modification. Residues 692 to 711 (VRPEWHELPNQEWSEQRESE) are compositionally biased toward basic and acidic residues. Ser748 bears the Phosphoserine mark. The span at 766 to 775 (GPREPPSEWT) shows a compositional bias: basic and acidic residues.

This sequence belongs to the protein-tyrosine phosphatase family. Non-receptor class 4 subfamily. As to quaternary structure, interacts with PSTPIP1 and TGFB1I1. Interacts with PTK2B/PYK2. Interacts with LPXN. Interacts with SORBS2; this interaction greatly enhances WASF1 dephosphorylation and might mediate partial translocation to focal adhesion sites. Post-translationally, phosphorylated by STK24/MST3 and this results in inhibition of its activity.

It is found in the cytoplasm. It localises to the cell junction. The protein resides in the focal adhesion. Its subcellular location is the cell projection. The protein localises to the podosome. The catalysed reaction is O-phospho-L-tyrosyl-[protein] + H2O = L-tyrosyl-[protein] + phosphate. Functionally, dephosphorylates a range of proteins, and thereby regulates cellular signaling cascades. Dephosphorylates cellular tyrosine kinases, such as ERBB2 and PTK2B/PYK2, and thereby regulates signaling via ERBB2 and PTK2B/PYK2. Selectively dephosphorylates ERBB2 phosphorylated at 'Tyr-1112', 'Tyr-1196', and/or 'Tyr-1248'. In Mus musculus (Mouse), this protein is Tyrosine-protein phosphatase non-receptor type 12 (Ptpn12).